Here is a 631-residue protein sequence, read N- to C-terminus: Myotonin-protein kinase (631 aa).

Topologically, residues 1–592 (MSAEVRLRQL…PRPGLSEARC (592 aa)) are cytoplasmic. The Protein kinase domain occupies 71-339 (FEILKVIGRG…AGDFQKHPFF (269 aa)). ATP is bound by residues 77–85 (IGRGAFSEV) and K100. Catalysis depends on D195, which acts as the Proton acceptor. Phosphoserine; by autocatalysis occurs at positions 216 and 228. T234 is subject to Phosphothreonine; by autocatalysis. One can recognise an AGC-kinase C-terminal domain in the interval 340 to 415 (FGLDWEGLRD…CCMAFRDNQV (76 aa)). A coiled-coil region spans residues 464–532 (AETTVTLQQL…QERMEMLQAP (69 aa)). A helical; Anchor for type IV membrane protein transmembrane segment spans residues 593–613 (LLLFAAALAAAATLGCTGLVA). The Lumenal segment spans residues 614–631 (YTGGLTPVWCFPGATFAP).

The protein belongs to the protein kinase superfamily. AGC Ser/Thr protein kinase family. DMPK subfamily. As to quaternary structure, homodimer; homodimerization stimulates the kinase activity. Interacts with HSPB2; may enhance DMPK kinase activity. Interacts with PLN; phosphorylates PLN. May interact with RAC1; may regulate DMPK kinase activity. Interacts with LMNA; may regulate nuclear envelope stability. Requires Mg(2+) as cofactor. Post-translationally, phosphorylated. Autophosphorylates. Phosphorylation by RAF1 may result in activation of DMPK. In terms of processing, proteolytic processing of the C-terminus may remove the transmembrane domain and release the kinase from membranes stimulating its activity. As to expression, expressed in all tissues tested, with a predominance in brain, skeletal muscle, heart, and other tissues containing smooth muscle. In the heart, expression is restricted to the cardiomyocytes in the ventricle and atrium.

The protein resides in the sarcoplasmic reticulum membrane. It localises to the cell membrane. It is found in the endoplasmic reticulum membrane. The protein localises to the nucleus outer membrane. Its subcellular location is the mitochondrion outer membrane. The protein resides in the cytoplasm. It localises to the cytosol. It catalyses the reaction L-seryl-[protein] + ATP = O-phospho-L-seryl-[protein] + ADP + H(+). The enzyme catalyses L-threonyl-[protein] + ATP = O-phospho-L-threonyl-[protein] + ADP + H(+). Coiled-coil-mediated oligomerization enhances the catalytic activity. Proteolytic processing of the C-terminus may release the protein from membranes and constitute a mean to regulate the enzyme. May be regulated by HSPB2, RAC1, RAF1 and G-protein second messengers. Its function is as follows. Non-receptor serine/threonine protein kinase which is necessary for the maintenance of skeletal muscle structure and function. May play a role in myocyte differentiation and survival by regulating the integrity of the nuclear envelope and the expression of muscle-specific genes. May also phosphorylate PPP1R12A and inhibit the myosin phosphatase activity to regulate myosin phosphorylation. Also critical to the modulation of cardiac contractility and to the maintenance of proper cardiac conduction activity probably through the regulation of cellular calcium homeostasis. Phosphorylates PLN, a regulator of calcium pumps and may regulate sarcoplasmic reticulum calcium uptake in myocytes. May also phosphorylate FXYD1/PLM which is able to induce chloride currents. May also play a role in synaptic plasticity. This chain is Myotonin-protein kinase (Dmpk), found in Mus musculus (Mouse).